Reading from the N-terminus, the 951-residue chain is Valine--tRNA ligase (951 aa).

The 'HIGH' region signature appears at 42 to 52; that stretch reads PNVTGSLHMGH. A 'KMSKS' region motif is present at residues 554–558; sequence KMSKS. Lys-557 is an ATP binding site. Residues 880-914 are a coiled coil; the sequence is AGLIDKAAELDRLAKEVAKLEAEIGRIESKLSNEG.

This sequence belongs to the class-I aminoacyl-tRNA synthetase family. ValS type 1 subfamily. As to quaternary structure, monomer.

It localises to the cytoplasm. The enzyme catalyses tRNA(Val) + L-valine + ATP = L-valyl-tRNA(Val) + AMP + diphosphate. In terms of biological role, catalyzes the attachment of valine to tRNA(Val). As ValRS can inadvertently accommodate and process structurally similar amino acids such as threonine, to avoid such errors, it has a 'posttransfer' editing activity that hydrolyzes mischarged Thr-tRNA(Val) in a tRNA-dependent manner. This Pectobacterium atrosepticum (strain SCRI 1043 / ATCC BAA-672) (Erwinia carotovora subsp. atroseptica) protein is Valine--tRNA ligase.